We begin with the raw amino-acid sequence, 621 residues long: uncharacterized protein (621 aa).

4 stretches are compositionally biased toward low complexity: residues 1 to 10 (MIEDNINNNE), 63 to 79 (TEPL…TTPS), 137 to 182 (NNNN…NNFN), and 309 to 347 (NQSI…NNNN). Disordered regions lie at residues 1 to 29 (MIED…DKNN), 63 to 100 (TEPL…SNKT), 135 to 194 (DDNN…KDND), 307 to 374 (KTNQ…EDDT), 430 to 471 (YNNN…IAKR), 492 to 539 (KQSQ…IKII), and 594 to 614 (PTQI…SPSK). Polar residues predominate over residues 348 to 357 (STLTSSNSLS). 3 stretches are compositionally biased toward low complexity: residues 431–459 (NNNN…NNNN), 496–539 (NNNN…IKII), and 597–613 (INSN…SSPS).

This is an uncharacterized protein from Dictyostelium discoideum (Social amoeba).